The primary structure comprises 122 residues: Large ribosomal subunit protein bL17 (122 aa).

This sequence belongs to the bacterial ribosomal protein bL17 family. As to quaternary structure, part of the 50S ribosomal subunit. Contacts protein L32.

The polypeptide is Large ribosomal subunit protein bL17 (Neisseria meningitidis serogroup B (strain ATCC BAA-335 / MC58)).